Here is a 275-residue protein sequence, read N- to C-terminus: Acetyl-coenzyme A carboxylase carboxyl transferase subunit beta (275 aa).

Residues 18–275 form the CoA carboxyltransferase N-terminal domain; that stretch reads KDNAGPAVPS…IHRLGGEMHA (258 aa). A disordered region spans residues 23 to 47; sequence PAVPSNTHSSKSNGNPVSEMKENKR. Residues 26-38 show a composition bias toward polar residues; sequence PSNTHSSKSNGNP.

The protein belongs to the AccD/PCCB family. In terms of assembly, acetyl-CoA carboxylase is a heterohexamer composed of biotin carboxyl carrier protein (AccB), biotin carboxylase (AccC) and two subunits each of ACCase subunit alpha (AccA) and ACCase subunit beta (AccD).

It is found in the cytoplasm. It carries out the reaction N(6)-carboxybiotinyl-L-lysyl-[protein] + acetyl-CoA = N(6)-biotinyl-L-lysyl-[protein] + malonyl-CoA. The protein operates within lipid metabolism; malonyl-CoA biosynthesis; malonyl-CoA from acetyl-CoA: step 1/1. Its function is as follows. Component of the acetyl coenzyme A carboxylase (ACC) complex. Biotin carboxylase (BC) catalyzes the carboxylation of biotin on its carrier protein (BCCP) and then the CO(2) group is transferred by the transcarboxylase to acetyl-CoA to form malonyl-CoA. This is Acetyl-coenzyme A carboxylase carboxyl transferase subunit beta from Alkaliphilus oremlandii (strain OhILAs) (Clostridium oremlandii (strain OhILAs)).